The primary structure comprises 284 residues: D-tagatose-1,6-bisphosphate aldolase subunit GatY (284 aa).

Residue aspartate 82 is the Proton donor of the active site. The Zn(2+) site is built by histidine 83 and histidine 180. Cysteine 181 contacts dihydroxyacetone phosphate. Histidine 208 contacts Zn(2+). Residues 209–211 (GAS) and 230–233 (NVAT) each bind dihydroxyacetone phosphate.

Belongs to the class II fructose-bisphosphate aldolase family. TagBP aldolase GatY subfamily. In terms of assembly, forms a complex with GatZ. Requires Zn(2+) as cofactor.

It catalyses the reaction D-tagatofuranose 1,6-bisphosphate = D-glyceraldehyde 3-phosphate + dihydroxyacetone phosphate. Its pathway is carbohydrate metabolism; D-tagatose 6-phosphate degradation; D-glyceraldehyde 3-phosphate and glycerone phosphate from D-tagatose 6-phosphate: step 2/2. Catalytic subunit of the tagatose-1,6-bisphosphate aldolase GatYZ, which catalyzes the reversible aldol condensation of dihydroxyacetone phosphate (DHAP or glycerone-phosphate) with glyceraldehyde 3-phosphate (G3P) to produce tagatose 1,6-bisphosphate (TBP). Requires GatZ subunit for full activity and stability. Is involved in the catabolism of galactitol. This is D-tagatose-1,6-bisphosphate aldolase subunit GatY from Salmonella paratyphi A (strain ATCC 9150 / SARB42).